The chain runs to 224 residues: uncharacterized protein (224 aa).

This is an uncharacterized protein from Listeria innocua serovar 6a (strain ATCC BAA-680 / CLIP 11262).